A 122-amino-acid chain; its full sequence is T cell receptor gamma variable 9 (122 aa).

Positions 1 to 20 (MLSLLHTSTLAVLGALCVYG) are cleaved as a signal peptide. One can recognise an Ig-like domain in the interval 27-122 (PQISSTKTLS…ATYYCALWEV (96 aa)). Cys-43 and Cys-117 are joined by a disulfide.

In terms of assembly, gamma-delta TR is a heterodimer composed of a gamma and delta chain; disulfide-linked. The gamma-delta TR is associated with the transmembrane signaling CD3 coreceptor proteins following the stoichiometry: a single gamma-delta TR heterodimer associates with one CD3D-CD3E heterodimer, one CD3G-CD3E heterodimer and one CD247 homodimer forming a stable octameric structure. Upon activation, gamma-delta TR complex associates with FCER1G to initiate intracellular signaling.

It localises to the cell membrane. V region of the variable domain of T cell receptor (TR) gamma chain that participates in the antigen recognition. Gamma-delta TRs recognize a variety of self and foreign non-peptide antigens frequently expressed at the epithelial boundaries between the host and external environment, including endogenous lipids presented by MH-like protein CD1D and phosphoantigens presented by butyrophilin-like molecule BTN3A1. Upon antigen recognition induces rapid, innate-like immune responses involved in pathogen clearance and tissue repair. Binding of gamma-delta TR complex to antigen triggers phosphorylation of immunoreceptor tyrosine-based activation motifs (ITAMs) in the CD3 chains by the LCK and FYN kinases, allowing the recruitment, phosphorylation, and activation of ZAP70 that facilitates phosphorylation of the scaffolding proteins LCP2 and LAT. This lead to the formation of a supramolecular signalosome that recruits the phospholipase PLCG1, resulting in calcium mobilization and ERK activation, ultimately leading to T cell expansion and differentiation into effector cells. Gamma-delta TRs are produced through somatic rearrangement of a limited repertoire of variable (V), diversity (D), and joining (J) genes. The potential diversity of gamma-delta TRs is conferred by the unique ability to rearrange (D) genes in tandem and to utilize all three reading frames. The combinatorial diversity is considerably increased by the sequence exonuclease trimming and random nucleotide (N) region additions which occur during the V-(D)-J rearrangements. This is T cell receptor gamma variable 9 from Homo sapiens (Human).